A 114-amino-acid polypeptide reads, in one-letter code: Protein D2 (114 aa).

This sequence belongs to the phosphatidylethanolamine-binding protein family.

This chain is Protein D2 (D2), found in Onchocerca volvulus.